We begin with the raw amino-acid sequence, 56 residues long: Small ribosomal subunit protein uS14B (56 aa).

Zn(2+) contacts are provided by C21 and C24. S25 bears the Phosphoserine mark. The Zn(2+) site is built by C39 and C42.

This sequence belongs to the universal ribosomal protein uS14 family. In terms of assembly, component of the small ribosomal subunit (SSU). Mature yeast ribosomes consist of a small (40S) and a large (60S) subunit. The 40S small subunit contains 1 molecule of ribosomal RNA (18S rRNA) and 33 different proteins (encoded by 57 genes). The large 60S subunit contains 3 rRNA molecules (25S, 5.8S and 5S rRNA) and 46 different proteins (encoded by 81 genes). Zn(2+) is required as a cofactor.

Its subcellular location is the cytoplasm. Its function is as follows. Component of the ribosome, a large ribonucleoprotein complex responsible for the synthesis of proteins in the cell. The small ribosomal subunit (SSU) binds messenger RNAs (mRNAs) and translates the encoded message by selecting cognate aminoacyl-transfer RNA (tRNA) molecules. The large subunit (LSU) contains the ribosomal catalytic site termed the peptidyl transferase center (PTC), which catalyzes the formation of peptide bonds, thereby polymerizing the amino acids delivered by tRNAs into a polypeptide chain. The nascent polypeptides leave the ribosome through a tunnel in the LSU and interact with protein factors that function in enzymatic processing, targeting, and the membrane insertion of nascent chains at the exit of the ribosomal tunnel. This chain is Small ribosomal subunit protein uS14B, found in Saccharomyces cerevisiae (strain ATCC 204508 / S288c) (Baker's yeast).